A 1183-amino-acid polypeptide reads, in one-letter code: Chromosome partition protein Smc (1183 aa).

An ATP-binding site is contributed by Pro-32–Asn-39. Residues Glu-162–Glu-483 are a coiled coil. The 114-residue stretch at Ser-519–Ile-632 folds into the SMC hinge domain. A coiled-coil region spans residues Ile-666–Glu-1019.

It belongs to the SMC family. In terms of assembly, homodimer.

It is found in the cytoplasm. In terms of biological role, required for chromosome condensation and partitioning. This chain is Chromosome partition protein Smc, found in Fusobacterium nucleatum subsp. nucleatum (strain ATCC 25586 / DSM 15643 / BCRC 10681 / CIP 101130 / JCM 8532 / KCTC 2640 / LMG 13131 / VPI 4355).